Consider the following 101-residue polypeptide: Small ribosomal subunit protein bS18c (101 aa).

The segment covering 1–19 (MDKSKRPFRKSKRSFRRRL) has biased composition (basic residues). The segment at 1-23 (MDKSKRPFRKSKRSFRRRLPPIG) is disordered.

It belongs to the bacterial ribosomal protein bS18 family. Part of the 30S ribosomal subunit.

The protein resides in the plastid. It localises to the chloroplast. This chain is Small ribosomal subunit protein bS18c, found in Ceratophyllum demersum (Rigid hornwort).